Consider the following 32-residue polypeptide: Delta-actitoxin-Eqd1a (32 aa).

This sequence belongs to the sea anemone short toxin (type III) family. Contains 4 disulfide bonds.

It is found in the secreted. The protein resides in the nematocyst. Functionally, binds specifically to sodium channels (Nav) of the axonal membrane of crayfish and prolongs the falling phase of the action potential. It also increases the maximum rates of rise of both action potential and resting potential. Is only active on crustaceans. The sequence is that of Delta-actitoxin-Eqd1a from Entacmaea quadricolor (Bubble-tip anemone).